The sequence spans 146 residues: Large-conductance mechanosensitive channel (146 aa).

The next 3 helical transmembrane spans lie at 21 to 41 (VGII…ADLI), 44 to 64 (IIGL…LGDG), and 83 to 103 (GSFI…FLLV).

This sequence belongs to the MscL family. In terms of assembly, homopentamer.

Its subcellular location is the cell inner membrane. Functionally, channel that opens in response to stretch forces in the membrane lipid bilayer. May participate in the regulation of osmotic pressure changes within the cell. This Cereibacter sphaeroides (strain ATCC 17029 / ATH 2.4.9) (Rhodobacter sphaeroides) protein is Large-conductance mechanosensitive channel.